A 480-amino-acid polypeptide reads, in one-letter code: Phenylalanine--tRNA ligase alpha subunit (480 aa).

Threonine 324 and phenylalanine 407 together coordinate L-phenylalanine. Glutamate 409 contributes to the Mg(2+) binding site. Phenylalanine 432 provides a ligand contact to L-phenylalanine.

It belongs to the class-II aminoacyl-tRNA synthetase family. Phe-tRNA synthetase alpha subunit type 2 subfamily. Tetramer of two alpha and two beta subunits. Mg(2+) serves as cofactor.

It localises to the cytoplasm. The enzyme catalyses tRNA(Phe) + L-phenylalanine + ATP = L-phenylalanyl-tRNA(Phe) + AMP + diphosphate + H(+). This is Phenylalanine--tRNA ligase alpha subunit from Methanocaldococcus jannaschii (strain ATCC 43067 / DSM 2661 / JAL-1 / JCM 10045 / NBRC 100440) (Methanococcus jannaschii).